We begin with the raw amino-acid sequence, 69 residues long: MEAEIWGRRIRAFRKLKGYTQEGFAKALGISVSILGEIERGNRLPSAAIIQDAADVLNISADELAPPEK.

Positions isoleucine 10–leucine 64 constitute an HTH cro/C1-type domain. Positions glutamine 21–arginine 40 form a DNA-binding region, H-T-H motif.

This is an uncharacterized protein from Bacillus subtilis (strain 168).